A 202-amino-acid chain; its full sequence is MTAPSLAPPRLIVGLGNPGRDYEETRHNAGFWFCARLAQAWGAALAHESRFHGIVGRHGTRWMLLPQTFMNRSGQAVGALARFHRIAPAEILVVHDELDIPPGQLRLKFGGGMGGHNGLKDITAHLGTQDYWRLRIGIGHPGDRSEVVNYVLKPPRREEQADIDAAIERALGLLPLIEKGEWNAATQRANSKPASPKSQETP.

TRNA is bound at residue Tyr-22. The active-site Proton acceptor is the His-27. Residues Phe-69, Asn-71, and Asn-117 each coordinate tRNA.

This sequence belongs to the PTH family. Monomer.

Its subcellular location is the cytoplasm. The enzyme catalyses an N-acyl-L-alpha-aminoacyl-tRNA + H2O = an N-acyl-L-amino acid + a tRNA + H(+). Functionally, hydrolyzes ribosome-free peptidyl-tRNAs (with 1 or more amino acids incorporated), which drop off the ribosome during protein synthesis, or as a result of ribosome stalling. In terms of biological role, catalyzes the release of premature peptidyl moieties from peptidyl-tRNA molecules trapped in stalled 50S ribosomal subunits, and thus maintains levels of free tRNAs and 50S ribosomes. This chain is Peptidyl-tRNA hydrolase, found in Thiobacillus denitrificans (strain ATCC 25259 / T1).